The primary structure comprises 255 residues: UPF0246 protein BVU_0413 (255 aa).

This sequence belongs to the UPF0246 family.

This is UPF0246 protein BVU_0413 from Phocaeicola vulgatus (strain ATCC 8482 / DSM 1447 / JCM 5826 / CCUG 4940 / NBRC 14291 / NCTC 11154) (Bacteroides vulgatus).